Reading from the N-terminus, the 518-residue chain is ORC1-type DNA replication protein 7 (518 aa).

ATP is bound at residue 94 to 98; the sequence is TGKTA. Positions 165-196 are disordered; that stretch reads DDDPNALEIGGSPGDDRTGNESSEGSDVSDSF. Positions 186-196 are enriched in low complexity; that stretch reads SSEGSDVSDSF. Positions 318 and 330 each coordinate ATP.

The protein belongs to the CDC6/cdc18 family.

Its function is as follows. Involved in regulation of DNA replication. Required to initiate DNA replication of the circular chromosome at a nearby autonomously replicating sequence (ARS) oriC1. The polypeptide is ORC1-type DNA replication protein 7 (orc7) (Halobacterium salinarum (strain ATCC 700922 / JCM 11081 / NRC-1) (Halobacterium halobium)).